The primary structure comprises 881 residues: Probable alpha/beta-glucosidase agdC (881 aa).

A signal peptide spans Met-1–Ala-14. N-linked (GlcNAc...) asparagine glycosylation is found at Asn-171, Asn-293, and Asn-373. Catalysis depends on Asp-422, which acts as the Nucleophile. The active site involves Glu-425. The tract at residues Tyr-440–Leu-485 is disordered. Residues Pro-448–Gly-463 are compositionally biased toward pro residues. An N-linked (GlcNAc...) asparagine glycan is attached at Asn-506. Asp-571 serves as the catalytic Proton donor. Asn-572, Asn-608, and Asn-742 each carry an N-linked (GlcNAc...) asparagine glycan.

The protein belongs to the glycosyl hydrolase 31 family.

Its subcellular location is the secreted. It catalyses the reaction Hydrolysis of terminal, non-reducing (1-&gt;4)-linked alpha-D-glucose residues with release of alpha-D-glucose.. The catalysed reaction is Hydrolysis of terminal, non-reducing beta-D-glucosyl residues with release of beta-D-glucose.. In terms of biological role, glucosidase involved in the degradation of cellulosic biomass. Has both alpha- and beta-glucosidase activity. This chain is Probable alpha/beta-glucosidase agdC (agdC), found in Aspergillus fumigatus (strain CBS 144.89 / FGSC A1163 / CEA10) (Neosartorya fumigata).